The chain runs to 172 residues: Large ribosomal subunit protein uL10 (172 aa).

This sequence belongs to the universal ribosomal protein uL10 family. Part of the ribosomal stalk of the 50S ribosomal subunit. The N-terminus interacts with L11 and the large rRNA to form the base of the stalk. The C-terminus forms an elongated spine to which L12 dimers bind in a sequential fashion forming a multimeric L10(L12)X complex.

Its function is as follows. Forms part of the ribosomal stalk, playing a central role in the interaction of the ribosome with GTP-bound translation factors. The chain is Large ribosomal subunit protein uL10 (rplJ) from Chlamydia trachomatis serovar D (strain ATCC VR-885 / DSM 19411 / UW-3/Cx).